Consider the following 219-residue polypeptide: MAEISAKLVKELREKTGAGMMDCKKALKETDGNIDKATDWLRQKGIASAGKLEGKVATEGLVESYIHTGGRIGVLVEVNCQTDFVARNESFKELVKNVAMQIAACPQVEYVSVDDIPTEFVESEKSIEMGREDLSNKPENIREKIVQGRIGKRLKELTLMDQPYIRDQNKTIEELIKETSAQLGEKVQVRRFIRFVLGEGLEKQESNFAEEVAAQTGKK.

The tract at residues Thr-82 to Val-85 is involved in Mg(2+) ion dislocation from EF-Tu.

The protein belongs to the EF-Ts family.

It localises to the cytoplasm. Associates with the EF-Tu.GDP complex and induces the exchange of GDP to GTP. It remains bound to the aminoacyl-tRNA.EF-Tu.GTP complex up to the GTP hydrolysis stage on the ribosome. The polypeptide is Elongation factor Ts (Trichodesmium erythraeum (strain IMS101)).